Consider the following 159-residue polypeptide: Endoribonuclease YbeY (159 aa).

3 residues coordinate Zn(2+): histidine 117, histidine 121, and histidine 127.

It belongs to the endoribonuclease YbeY family. Zn(2+) serves as cofactor.

It localises to the cytoplasm. Its function is as follows. Single strand-specific metallo-endoribonuclease involved in late-stage 70S ribosome quality control and in maturation of the 3' terminus of the 16S rRNA. The sequence is that of Endoribonuclease YbeY from Azorhizobium caulinodans (strain ATCC 43989 / DSM 5975 / JCM 20966 / LMG 6465 / NBRC 14845 / NCIMB 13405 / ORS 571).